Reading from the N-terminus, the 45-residue chain is Large ribosomal subunit protein bL36 (45 aa).

A disordered region spans residues 1-20 (MKVSSSIKADPSKGDKLVRR).

It belongs to the bacterial ribosomal protein bL36 family.

The sequence is that of Large ribosomal subunit protein bL36 from Chlamydia abortus (strain DSM 27085 / S26/3) (Chlamydophila abortus).